We begin with the raw amino-acid sequence, 194 residues long: Metalloproteinase inhibitor 2 (194 aa).

Cys-1 provides a ligand contact to Zn(2+). Involved in metalloproteinase-binding regions lie at residues 1–4 (CSCS) and 69–70 (SA). 6 disulfide bridges follow: Cys-1–Cys-72, Cys-3–Cys-101, Cys-13–Cys-126, Cys-128–Cys-175, Cys-133–Cys-138, and Cys-146–Cys-167. In terms of domain architecture, NTR spans 1 to 126 (CSCSPVHPQQ…SLNHRYQMGC (126 aa)).

This sequence belongs to the protease inhibitor I35 (TIMP) family. Interacts (via the C-terminal) with MMP2 (via the C-terminal PEX domain); the interaction inhibits the MMP2 activity. Post-translationally, the activity of TIMP2 is dependent on the presence of disulfide bonds.

The protein localises to the secreted. Complexes with metalloproteinases (such as collagenases) and irreversibly inactivates them by binding to their catalytic zinc cofactor. The chain is Metalloproteinase inhibitor 2 (TIMP2) from Oryctolagus cuniculus (Rabbit).